The sequence spans 4456 residues: MASKAEKKRKVAGRGGARAGRVVRAPQSTAGPGATEASLLPDGQEPEPESGKEDSVLGLQAFASWRLTPALHGEANTPPTLLHPQPLFHRRLTTLNLILSCSRAGTRDLALKPFFLSRTMLTGLADATWTGEHDMVLEHFVQDPAVPALTIFIDPVFGLKLELGMPVQTQNQIVYFIRQAPVPITPENFEETVQYGTVRGAYIPALLRLLSGVYVPQIFMNKSWPESIRNHFVSHLHRFLASLTDTRYKLEGHTVLYIPAEAVQMDPEVVVKDKELVQRLETSMIHWTRQIKEVLSAQESVETGENLGPLEEIEFWHNRCMDLSSISKQLVKKGVKHIESILFLAKSSYLTPFRKLAQQIQDGSRQAQSNLTFLSILREPYQELAFMKPKDISEKLPKLISLIRIIWVNSPHYNTRERLTALFRKVCECQYHFARWEDGKQGPLPCFFGAQGPQITRNLLEIEDIFHKNLQTLRAVRGGILDVKNTSWHEDYNKFRGGIKDLEVMTQNLITSAFELVRDVEHGVLLLDTFHRLATREAIMRTYEKKAVDLYMLFNSELALVNRELNKKWPYLEPYMTQYSGQAHWVRILRRRIDRVMNCLSGAHFLPHIGTGEESIHTYQQMAQAIDEMVRKTFQEWTATLDKDCIRRLDMSLLRISQEKVGMLDVNFDKTLLILFAEIDYWERLLFETPHYVMNVAERAEDLRILRENLLLVARDYNRIIAMLSPDEQALFKERIRFLDKKIHPGLKKLNWALKGASAFFITECRMHASKVQMIVNDFKASTLTIGWKAQEMSELLLVHITGKQVYRDLEFEEAQREHRMAAQQKLVKLHQDVVNIMTNSYEVFKNDGPEIQQQWLLYTIRLDHMMEDALRLNVKWSLLELSKAINGDGKTTPNPLFRVLVILQNDVRGGGSQVEFSPTLQTLASVVNDIGSHLFATISVFRHLPDILTKRKMNREPIYVLVERDEDIRKIQAQISSGMTNNASLLQNYLKTWDMYREIWEINKDSFIRRYQRLNPPVSSFDADIARYTEVANNVQKEETVLNIQFVMLDCSHLKFSLVQHCNEWQNKFTTLLKEMAAGRLADLHSYLKDNAEKISHPPQTLEELGVSLQLMDTLQHDLPNLETQIPPIHEQFTILEKYEVPVPDTVLEMLESLNGEWLTFQQILLDSEQMLKKHKEKFKTGLIHAADDFKKKAHNLLEDFEFKGPFTSTVGHTAALDQIAQMRAMLMAMRDEENNLRSNLGIFKIEQPVSKDLQILEKELDALQQVWEITRDWEESWNQWKMGCFQTLQTEAMESMAHGLFRRLTRLAKEYKDRNWEIIETTRSKIEQFKRTMPLISDLRNPALRERHWDQVKEEVQREFDQESESFTLEQIVKLGMDQHVEKIAEISASATKELAIEVGLQNIAKTWDSTQLDIVPYKDKGHHRLRGTEEVFQALEDNQVALSTMKASRFVKAFEKDVDHWERCLSLILEVIEMVLTVQRQWMYLENIFLGEDIRKQLPNESALFDQVNNNWKAIMDRMNKDNNALRSTHYPGLLETLIEMNAILEDIQKSLDMYLETKRHIFPRFYFLSNDDLLEILGQSRNPEAVQPHLKKCFDNIKLLKIQKVGGSSSKWEAVGMFSGDGEYIDFLHPVLLEGPVESWLGDVERAMRMTLRDLLRNCRVALKKFLNKRDKWVKDWAGQVVITASQIQWTADVTKCLMTAKERSDKKILKVSILNKYSEAIRGNLTKIMRLKIVALVTIEIHARDVLEKLYKSGLMDVSSFDWLSQLRFYWEKDVDDCIIRQTNTQFQYGYEYLGNSGRLVITPLTDRCYMTLTTALHLHRGGSPKGPAGTGKTETVKDLGKALGIYVIVVNCSEGLDYKSMGRMYSGLAQSGAWGCFDEFNRINIEVLSVVAQQILSILSALTANLTRFYFEGFEINLVWSCGIFITMNPGYAGRTELPENLKSMFRPIAMVVPDSTLIAEIILFGEGFGNCKILAKKVYTLYSLAVQQLSRQDHYDFGLRALTSLLRYAGKKRRLQPDLSDEEVLLLSMRDMNIAKLTSVDVPLFNAIVQDLFPNIELPVIDYGKLRDTIEQEIREMGLQITPFTLTKVLQLYETKNSRHSTMIVGGTGSSKTTSWKILQASLTSLCRAGEPNYNIVREFPLNPKALSLGELYGEYDLNTNEWTDGILSSVMRVACADEKPDEKWILFDGPVDTLWIESMNSVMDDNKVLTLINGERIAMPEQVSLLFEVENLAVASPATVSRCGMVYTDYVDLGWKPYVQSWLEKRPKTEVEPLQRMFEKFINKILSFKKDNCNELVPVPEYSGIISLCKLYTVLATPENGVNPADAENYSFMVEMTFVFSMIWSVCASVDEDGRKKIDSYLREIEGSFPNKDTVYEYYVNPKMRTWTSFEEKLPKSWRYPPNAPFYKIMVPTVDTVRYNYLVSTLVANQNPVLLVGPVGTGKTSIAQSVLQSLPSSQWSVLVVNMSAQTTSNNVQSIIESRVEKRTKGVYVPFGGKSMITFMDDLNMPAKDMFGSQPPLELIRLWIDYGFWYDRVKQSIKHIRDMFLMAAMGPPGGGRTVISPRLQSRFNIINMTFPTESQIIRIFGTMINQKLQDFEEEVKPIGNVVTEATLDVYNTVVQRFLPTPAKIHYLFNLRDISKVFQGMLRANKDFHDTKASITRLWIHECFRVFSDRLVDTADMEAFMGILSDKLGTFFDLTFHHLCPNKRPPIFGDFLKEPKVYEDLVDLTVLKTAMETALNEYNLSPSVVPMQLVLFREAIEHITRIVRVIGQPRGNMLLVGIGGSGRQSLARLASSICDYNTFQIEVTKHYRKQEFRDDIKRLYRQAGVELQTTSFLFVDTQIADESFLEDINNILSSGEVPNLYKSDEFEEIQNHIIDQARAEQIPESSDSLFAYLIERVRNNLHIVLCLSPVGDPFRNWIRQYPALVNCTTINWFSEWPREALLEVAEKYIIGVDLGTQENIHRKVAQIFVTMHWSVAQYSQKMLLELRRYNYVTPTNYLELVSGYKKLLGEKRQELLDQANKLRTGLFKIDETREKVEVMSLELEDAKKKVAEFQKQCEEYLVIIVQQKREADEQQKAVTANSEKIAIEEVKCQALADNAQKDLEEALPALEEAMRALESLNKKDIGEIKSYGRPPAQVEIVMQAVMILRGNEPTWAEAKRQLGEQNFIKSLINFDKDNISDKVLKKIGAYCAQPDFQPDIIGRVSLAAKSLCMWVRAMELYGRLYRVVEPKRIRMNAAMAQLQEKQAALAEAQEKLREVAEKLEMLKKQYDEKLAQKEELRKKSEEMELKLERAGMLVSGLAGEKARWEETVQGLEEDLGYLVGDCLIAAAFLSYMGPFLTNYRDEIINQIWIRKIRELQVPCSPRFAIDNFLTNPTKVRDWNIQGLPSDAFSTENGIIVTRGNRWALMIDPQGQALKWIKNMEGNQGLKIIDLQMHDYLRVLEHAIQFGFPVLLQNVQEYLDPTLNPVLNKSVARIGGRMLIRIGDKEVEYNPNFRFYLTTKLSNPHYNPETSAKTTIVNFAVKEQGLEAQLLGIVVRKERPELEEQKDSLVINIAAGKRKLKELEDEILRLLNEATGSLLDDVQLVNTLQTSKITATEVTEQLETSETTEINIDLAREAYRPCAQRASVLFFVLNDMGRIDPMYQFSLDAYIGLFILSIDKSHRSNKLEDRIEYLNDYHTYAVYRYTCRTLFERHKLLFSFHMCAKILETSGKLNMDEYNFFLRGGVVLDREGQMDNPCTSWLADAYWDNITELDKLTNFHGLMNSFEQYPRDWHLWYTNSSPEKAMLPGEWENACNEMQRMLIVRSLRQDRVAFCVTSFIVSNLGSRFIEPPVLNMKSVMEDSTPRSPLVFILSPGVDPTSALLQLAEHTGMAHRFHALSLGQGQAPIAARLLREGVNQGHWVFLANCHLSLSWMPNLDKLVEQLQVEDPHPSFRLWLSSSPHPDFPISILQASIKMTTEPPKGLKANMTRLYQLMTEAQFTHCSKPAKYKKLLFALCFFHSILLERKKFLQLGWNIIYGFNDSDFEVSENLLSLYLDEYEETPWDALKYLIAGVNYGGHVTDDWDRRLLTTYINDYFCDLSLTTPFYRLSVLDTYYIPKDGSLASYKEYISMLPSMDPPEAFGQHPNADVASQITEARTLFETLLSLQPQITPTRVGGQSREEKVLELAADVKQKIPEMIDYEGTRKLLALDPSPLNVVLLQEIQRYNKLMKTILFSLTDLEKGIQGLIVMSTSLEEIFNCIFDAHVPPLWGKVYPSQKPLASWTRDLAVRVEQFETWASRARPPVLFWLSGFTFPTGFLTAVLQSAARQNNISVDSLSWEFIVSTVDDSNLVYPPKDGVWVRGLYLEGAGWDRKNSCLVEAEPMQLVCLMPTIHFRPAESRKKSAKGMYSCPCYYYPNRAGSTDRASFVIGIDLRSGSMTSDHWIKRGTALLMSLDS.

Positions 1-12 (MASKAEKKRKVA) are enriched in basic residues. Positions 1–55 (MASKAEKKRKVAGRGGARAGRVVRAPQSTAGPGATEASLLPDGQEPEPESGKEDS) are disordered. Residues 1–1795 (MASKAEKKRK…RQTNTQFQYG (1795 aa)) are stem. Residues 1218–1274 (LDQIAQMRAMLMAMRDEENNLRSNLGIFKIEQPVSKDLQILEKELDALQQVWEITRD) adopt a coiled-coil conformation. Residues 1439–1474 (EDNQVALSTMKASRFVKAFEKDVDHWERCLSLILEV) form a TPR 1 repeat. AAA regions lie at residues 1794–2015 (YGYE…LLRY), 2075–2302 (DTIE…DNCN), 2407–2654 (RYPP…VFQG), and 2751–3003 (EYNL…LRRY). Residues 1832–1839 (GPAGTGKT), 2113–2120 (GGTGSSKT), and 2445–2452 (GPVGTGKT) contribute to the ATP site. Residues 2750–2783 (NEYNLSPSVVPMQLVLFREAIEHITRIVRVIGQP) form a TPR 2 repeat. Position 2791–2798 (2791–2798 (GIGGSGRQ)) interacts with ATP. Positions 3018-3301 (YKKLLGEKRQ…EELRKKSEEM (284 aa)) are stalk. The stretch at 3041-3078 (FKIDETREKVEVMSLELEDAKKKVAEFQKQCEEYLVII) forms a coiled coil. One copy of the TPR 3 repeat lies at 3101–3134 (IEEVKCQALADNAQKDLEEALPALEEAMRALESL). Coiled-coil stretches lie at residues 3245–3333 (KRIR…EEDL) and 3552–3596 (VRKE…GSLL). AAA stretches follow at residues 3387 to 3617 (LTNP…EVTE) and 3833 to 4052 (VTSF…LLSL). 2 TPR repeats span residues 4101-4134 (TTPF…LPSM) and 4135-4169 (DPPE…QPQI).

It belongs to the dynein heavy chain family. Part of the axonemal inner dynein arm complex that consists of at least two heavy chains and a number of intermediate and light chains. Interacts with DNAI4.

The protein resides in the cytoplasm. Its subcellular location is the cytoskeleton. The protein localises to the cilium axoneme. It is found in the flagellum axoneme. Functionally, as part of the axonemal inner dynein arm complex plays a central role in ciliary beat. Expressed in sperm flagellum, it is required for sperm motility. Dyneins are microtubule-based molecular motors possessing ATPase activities that can convert the chemical energy of ATP into relative sliding between adjacent microtubule doublets to generate ciliary bending. The polypeptide is Dynein axonemal heavy chain 2 (Mus musculus (Mouse)).